The primary structure comprises 351 residues: MSLLPYALARSFLFGMDAEAAHELTMDMLARGQRTPLQWAWCNETVSDPIELAGLRFPNRVGLAAGLDKNARCIDALAAMGFGFVEVGTVTPRAQPGNPKPRMFRLPEARALINRLGFNNEGLDAFVANVQRSQVRTQGRGQSKLLLGLNIGKNATTPIEDATRDYLTCLEGVYPHADYVTVNISSPNTQNLRALQSDAALDCLLGAIAEHRGQLAAAQGRRVPIFVKIAPDLDEAQVAVIATTLQRHGMDGVVATNTTIRRDAVQGLRHAGETGGLSGAPVLEASNAVIRQLRAALGPAFPIIGVGGILSAEDAVSKIRAGADVVQIYTGLIYEGPALVGRAAKAIRDLR.

Residues 65–69 (AGLDK) and Thr89 each bind FMN. Lys69 serves as a coordination point for substrate. Substrate is bound at residue 114 to 118 (NRLGF). Positions 150 and 183 each coordinate FMN. Asn183 serves as a coordination point for substrate. Ser186 (nucleophile) is an active-site residue. Asn188 is a substrate binding site. FMN contacts are provided by Lys228 and Thr256. Residue 257–258 (NT) participates in substrate binding. FMN-binding positions include Gly279, Gly308, and 329–330 (YT).

The protein belongs to the dihydroorotate dehydrogenase family. Type 2 subfamily. Monomer. FMN is required as a cofactor.

The protein localises to the cell membrane. The enzyme catalyses (S)-dihydroorotate + a quinone = orotate + a quinol. It participates in pyrimidine metabolism; UMP biosynthesis via de novo pathway; orotate from (S)-dihydroorotate (quinone route): step 1/1. Catalyzes the conversion of dihydroorotate to orotate with quinone as electron acceptor. The polypeptide is Dihydroorotate dehydrogenase (quinone) (Acidovorax ebreus (strain TPSY) (Diaphorobacter sp. (strain TPSY))).